Here is a 564-residue protein sequence, read N- to C-terminus: Zyxin (564 aa).

N-acetylalanine is present on Ala-2. Residues 30 to 141 (VAPKPKVNPF…TQLPPQPREK (112 aa)) form a disordered region. Pro residues-rich tracts occupy residues 63 to 78 (IPPP…PPPL) and 93 to 109 (FPPP…PPAP). Phosphoserine is present on residues Ser-117, Ser-144, Ser-170, and Ser-171. The segment at 162–344 (NDPFKARVSS…RSPGGPGPLT (183 aa)) is disordered. Composition is skewed to pro residues over residues 174–189 (VPPP…PSTK) and 197–214 (PLPP…PQPQ). Position 180 is a phosphothreonine (Thr-180). Over residues 234-243 (QPVSSANTQP) the composition is skewed to polar residues. Arg-244 carries the post-translational modification Asymmetric dimethylarginine. Residues 255–275 (PKFAPVAPKFTPVVSKFSPGA) show a composition bias toward low complexity. 2 positions are modified to N6-acetyllysine: Lys-256 and Lys-263. Thr-265 bears the Phosphothreonine mark. Lys-270 carries the post-translational modification N6-acetyllysine. Phosphoserine is present on residues Ser-272 and Ser-300. A compositionally biased stretch (polar residues) spans 294-310 (SSVSTGSPQPPSFTYAQ). The segment covering 311–322 (QKEKPLVQEKQH) has biased composition (basic and acidic residues). Ser-336 carries the phosphoserine modification. LIM zinc-binding domains follow at residues 376 to 435 (CGKC…TLEK), 436 to 495 (CNTC…YAPR), and 496 to 562 (CSVC…SARA).

This sequence belongs to the zyxin/ajuba family. Interacts, via the Pro-rich regions, with the EVH1 domains of ENAH, EVL and VASP. Interacts with the first LIM domain of TES. Interacts with SYNPO2.

The protein localises to the cytoplasm. The protein resides in the cytoskeleton. It localises to the cell junction. Its subcellular location is the focal adhesion. It is found in the nucleus. Its function is as follows. Adhesion plaque protein. Binds alpha-actinin and the CRP protein. Important for targeting TES and ENA/VASP family members to focal adhesions and for the formation of actin-rich structures. May be a component of a signal transduction pathway that mediates adhesion-stimulated changes in gene expression. This chain is Zyxin (Zyx), found in Mus musculus (Mouse).